The chain runs to 233 residues: Coproporphyrinogen-III oxidase 2, chloroplastic (233 aa).

The N-terminal 48 residues, 1-48 (MASHSSTLFTSPSSFILFSSHRLKSSPNYFTYHFPRSVKRPHFDLRCS), are a transit peptide targeting the chloroplast. S174 contributes to the substrate binding site. H188 (proton donor) is an active-site residue.

This sequence belongs to the aerobic coproporphyrinogen-III oxidase family. Homodimer.

The protein localises to the plastid. It localises to the chloroplast. It catalyses the reaction coproporphyrinogen III + O2 + 2 H(+) = protoporphyrinogen IX + 2 CO2 + 2 H2O. The protein operates within porphyrin-containing compound metabolism; protoporphyrin-IX biosynthesis; protoporphyrinogen-IX from coproporphyrinogen-III (O2 route): step 1/1. It functions in the pathway porphyrin-containing compound metabolism; chlorophyll biosynthesis. Functionally, key enzyme in heme biosynthesis. Catalyzes the oxidative decarboxylation of propionic acid side chains of rings A and B of coproporphyrinogen III. In Arabidopsis thaliana (Mouse-ear cress), this protein is Coproporphyrinogen-III oxidase 2, chloroplastic (CPX2).